A 709-amino-acid polypeptide reads, in one-letter code: MSEQNNEQRSQAAGTDTVDRGNSNAKLEQLEAYREDATGEALSTNTGTRIADNQNTLKAGERGPSLLEDFIMREKITHFDHERIPERVVHARGSAAHGYFEAYEDLSDLTKAGFLAEAGKRTPVFVRFSTVQGPRGSADTVRDVRGFAVKFYTDEGNFDLVGNNMPVFFIQDAIKFPDFVHAVKPEPHNEIPTGASAHDTFWDFVSLTPESAHMVMWLMSDRAIPIAYRNMQGFGVHTFRLVNAAGESVLVKFHWRPKSGTCSLVWDEAQKLAGKDPDFNRRTLWEDIEKGDYPEWELGLQVIPENQQDSFDFDLLDPTKLVPEELVPVRVVGRMVLNRNPDNFFAETEQVAFHVGHVVPGIDFTNDPLLQGRLFSYTDTQLLRLSGPNFNEIPINRPLCPFHNNQRDAPHRQTINRGRASYEPNSIDGGWPKETPPAARNGGFSTYHEPVSGSKLRKRADSFADHFSQAALFWHSMSEAEQAHIVAAYSFELSKVERQSIREREVNQILLNIDPQLAARVAANVGVQLAAPANPTPQPKPSPALSQMNLLSGDIRSRKVAILIADGVAESDVSDLRDALRQEGADAKLIAPSASPVQAENGAELSPEGTWDGLPSVAFDAVFVPGGAASSQAIGADGRGLHYLLEAYKHLKPVAFAGDAQALASQLSLPGDPGVVLGATATDVFPGLRQALMQHRIWQREAATKAIPA.

Residues 1–26 are compositionally biased toward polar residues; the sequence is MSEQNNEQRSQAAGTDTVDRGNSNAK. The segment at 1–32 is disordered; sequence MSEQNNEQRSQAAGTDTVDRGNSNAKLEQLEA. Active-site residues include H90 and N163. Y377 is a heme binding site. Residues 419-443 form a disordered region; it reads RASYEPNSIDGGWPKETPPAARNGG.

The protein belongs to the catalase family. HPII subfamily. Heme is required as a cofactor.

It localises to the cytoplasm. The catalysed reaction is 2 H2O2 = O2 + 2 H2O. Decomposes hydrogen peroxide into water and oxygen; serves to protect cells from the toxic effects of hydrogen peroxide. The chain is Catalase HPII (katE) from Pseudomonas aeruginosa (strain ATCC 15692 / DSM 22644 / CIP 104116 / JCM 14847 / LMG 12228 / 1C / PRS 101 / PAO1).